We begin with the raw amino-acid sequence, 494 residues long: UPF0164 protein TP_0859/TP_0860 (494 aa).

The first 44 residues, 1–44, serve as a signal peptide directing secretion; that stretch reads MVRRPCVSAAPVRVGGRLVFGFARVGSRGLCLGALLLSPRIVLA.

Belongs to the UPF0164 family.

The chain is UPF0164 protein TP_0859/TP_0860 from Treponema pallidum (strain Nichols).